The following is a 188-amino-acid chain: Ribosome maturation factor RimP (188 aa).

Belongs to the RimP family.

It is found in the cytoplasm. Required for maturation of 30S ribosomal subunits. The chain is Ribosome maturation factor RimP from Corynebacterium aurimucosum (strain ATCC 700975 / DSM 44827 / CIP 107346 / CN-1) (Corynebacterium nigricans).